A 259-amino-acid polypeptide reads, in one-letter code: UPF0246 protein PFL_1025 (259 aa).

This sequence belongs to the UPF0246 family.

The chain is UPF0246 protein PFL_1025 from Pseudomonas fluorescens (strain ATCC BAA-477 / NRRL B-23932 / Pf-5).